We begin with the raw amino-acid sequence, 326 residues long: Serpentine receptor class alpha-12 (326 aa).

Residues 1–17 (MSCASEVQAQLFTHPVQ) are Extracellular-facing. The chain crosses the membrane as a helical span at residues 18–38 (IIYACVQTVLFLATIIGSLLA). At 39–54 (IVQLCKKTTIPDSTKV) the chain is on the cytoplasmic side. Residues 55 to 75 (LLIGALFFANAHELAYFSSPF) form a helical membrane-spanning segment. At 76–101 (KVFKMNLFHTNTSCYPLASTLECIPT) the chain is on the extracellular side. A helical membrane pass occupies residues 102–122 (TTVLAMGISGNMLIQSALSIF). Over 123–138 (RLLATIFPVCYSRMRA) the chain is Cytoplasmic. The chain crosses the membrane as a helical span at residues 139–159 (LPGVVLLFMVLIPSFLSYSWI). The Extracellular portion of the chain corresponds to 160–185 (RSDIVLDDYQMFCSQWSANISSRANT). A helical membrane pass occupies residues 186-206 (YLEYCSYLTVAHIIINALIIL). Residues 207–234 (RNRSVESKCRFDVQQRYLNSETLKTTQT) lie on the Cytoplasmic side of the membrane. The helical transmembrane segment at 235–255 (ICYLSIAQFLAMFLYSGGVLF) threads the bilayer. Residues 256–270 (MRKNQKNIPTLIYIN) lie on the Extracellular side of the membrane. Residues 271–291 (VIVWVYAPPYACVSLAPLILF) traverse the membrane as a helical segment. Over 292–326 (SLWNLKKQRQIRIQSITVQKETQEDHIRKLQLSWG) the chain is Cytoplasmic.

This sequence belongs to the nematode receptor-like protein sra family.

It is found in the membrane. This is Serpentine receptor class alpha-12 from Caenorhabditis briggsae.